We begin with the raw amino-acid sequence, 262 residues long: ATP synthase subunit a (262 aa).

Helical transmembrane passes span 30–50 (ITSL…LTIF), 64–84 (WNIV…DQIG), 91–111 (LIYF…NILG), 123–143 (ISVT…IGFS), 149–169 (FFSL…LVLI), 195–215 (LFGV…SILL), and 220–240 (IGLP…VALL).

This sequence belongs to the ATPase A chain family. F-type ATPases have 2 components, CF(1) - the catalytic core - and CF(0) - the membrane proton channel. CF(1) has five subunits: alpha(3), beta(3), gamma(1), delta(1), epsilon(1). CF(0) has three main subunits: a, b and c.

The protein localises to the mitochondrion inner membrane. Functionally, mitochondrial membrane ATP synthase (F(1)F(0) ATP synthase or Complex V) produces ATP from ADP in the presence of a proton gradient across the membrane which is generated by electron transport complexes of the respiratory chain. F-type ATPases consist of two structural domains, F(1) - containing the extramembraneous catalytic core and F(0) - containing the membrane proton channel, linked together by a central stalk and a peripheral stalk. During catalysis, ATP synthesis in the catalytic domain of F(1) is coupled via a rotary mechanism of the central stalk subunits to proton translocation. Key component of the proton channel; it may play a direct role in the translocation of protons across the membrane. This is ATP synthase subunit a (ATP6) from Allomyces arbusculus (Aquatic fungus).